Here is a 291-residue protein sequence, read N- to C-terminus: Beta-lactamase CTX-M-14 (291 aa).

Residues 1–28 (MVTKRVQRMMFAAAACIPLLLGSAPLYA) form the signal peptide. Catalysis depends on Ser73, which acts as the Nucleophile; acyl-ester intermediate. Lys76, Ser133, Glu169, and Ser240 together coordinate a beta-lactam.

It belongs to the class-A beta-lactamase family. Monomer.

The protein localises to the secreted. It catalyses the reaction a beta-lactam + H2O = a substituted beta-amino acid. Its activity is regulated as follows. Inhibited by the beta-lactamase-blocking agents clavulanic acid, tazobactam and sulbactam. Its function is as follows. Extended-spectrum beta-lactamase (ESBL) which confers resistance to penicillins, as well as first, second, and third-generation cephalosporins. Has cefotaxime-hydrolyzing activity. The polypeptide is Beta-lactamase CTX-M-14 (Escherichia coli).